The chain runs to 332 residues: UPF0194 membrane protein YbhG (332 aa).

The first 16 residues, Met1–Ala16, serve as a signal peptide directing secretion. The stretch at Glu108–Ala209 forms a coiled coil.

This sequence belongs to the UPF0194 family.

Its subcellular location is the periplasm. This Shigella boydii serotype 4 (strain Sb227) protein is UPF0194 membrane protein YbhG.